The following is a 234-amino-acid chain: Leucyl/phenylalanyl-tRNA--protein transferase (234 aa).

The protein belongs to the L/F-transferase family.

Its subcellular location is the cytoplasm. The catalysed reaction is N-terminal L-lysyl-[protein] + L-leucyl-tRNA(Leu) = N-terminal L-leucyl-L-lysyl-[protein] + tRNA(Leu) + H(+). It catalyses the reaction N-terminal L-arginyl-[protein] + L-leucyl-tRNA(Leu) = N-terminal L-leucyl-L-arginyl-[protein] + tRNA(Leu) + H(+). The enzyme catalyses L-phenylalanyl-tRNA(Phe) + an N-terminal L-alpha-aminoacyl-[protein] = an N-terminal L-phenylalanyl-L-alpha-aminoacyl-[protein] + tRNA(Phe). Functions in the N-end rule pathway of protein degradation where it conjugates Leu, Phe and, less efficiently, Met from aminoacyl-tRNAs to the N-termini of proteins containing an N-terminal arginine or lysine. This is Leucyl/phenylalanyl-tRNA--protein transferase from Shigella flexneri serotype 5b (strain 8401).